A 276-amino-acid polypeptide reads, in one-letter code: Membrane protein insertase YidC 2 (276 aa).

The signal sequence occupies residues 1 to 22 (MGVKKKLKLTSLLGLSLLIMTA). Residue Cys23 is the site of N-palmitoyl cysteine attachment. The S-diacylglycerol cysteine moiety is linked to residue Cys23. 4 consecutive transmembrane segments (helical) span residues 58–78 (ISIGVGIILFTVLIRTVLLPV), 130–150 (SDSLWPILIQMPVILALFQAL), 169–189 (VDTTLVLPILAAVFTFLSTWL), and 207–227 (GIPVLIFIFAVYAPGGVALYW).

Belongs to the OXA1/ALB3/YidC family. Type 2 subfamily. In terms of assembly, interacts with KhpB (also called EloR/Jag).

The protein resides in the cell membrane. In terms of biological role, required for the insertion and/or proper folding and/or complex formation of integral membrane proteins into the membrane. Involved in integration of membrane proteins that insert both dependently and independently of the Sec translocase complex, as well as at least some lipoproteins. The chain is Membrane protein insertase YidC 2 from Streptococcus pneumoniae (strain ATCC BAA-255 / R6).